The sequence spans 662 residues: MHLNTSICEVDNPDLTEEREKGTFDTDKMAAVIYGSEKLARRRREISEAVSKIPELADTQPFPFMDRLEKITEGSRKLEVLNNNIRDIIDYDDNGERLHIYQEVTGMEGHPLALHEVMFIPALVSQASKEQQEKWLGRARRREIIGCYAQTEMGHGTNLRKLETTATYFPDTQEFVLNTPTTTALKWWPGALGKSSNYAVVVVDMIIKGKSYGPHPFMVQLRDEKTHIPLKGIVVGDIGPKMSFNGGDNGFLGFDKFRVPRTNLLMRHVRVEADGTYVKPPHAKVNHSAMVHVRSHMATGQGALLAQALIIAVRYSAVRRQGFLENKTQEVKVLDYQTQQHRLFPSLARAYAFIFTGFETIHLYSQLLKDVDMGNTSGMADLHALTSGLKSVVTHQTGEGIEQARMACGGHGYSMASYISEIYGIAIGGCTYEGENMVMLLQLARYLVKSVELIKSGEAKKLGPMVSYLAAKGGHPDLSSLNGYVTAFEHMARRQAWKATEKFLKLMESGESREIAWNKSTVELTRASRLHTRLFIIEAFMRRVSRIEDIPVKEVLTDLLHLHVNYELLDVATYALEFMSSTQLDYIRDQLYLYLEKIRPSAVSLVDSFQISDMQLRSVLGRRDGNVYENLFKWAKSSPLNKSDVLPSVDKYLMPMMEKAKL.

FAD-binding positions include 148-151 (YAQT), 156-157 (GT), and Gly-190. Substrate contacts are provided by residues 284 to 287 (KVNH) and Arg-294. Residues Arg-319 and 339–342 (QQHR) contribute to the FAD site. ATP is bound by residues His-341, Ser-391, His-395, and Gln-403. Gly-410 lines the FAD pocket. 432-433 (YE) provides a ligand contact to substrate. Glu-433 functions as the Proton acceptor in the catalytic mechanism. Glu-435 is a binding site for FAD. ATP is bound by residues 526–529 (RASR) and Tyr-574. Residues 660–662 (AKL) carry the Microbody targeting signal motif.

The protein belongs to the acyl-CoA oxidase family. As to quaternary structure, homodimer. The cofactor is FAD.

The protein resides in the peroxisome. It catalyses the reaction asc-C9-CoA + O2 = asc-DeltaC9-CoA + H2O2. Its pathway is lipid metabolism; peroxisomal fatty acid beta-oxidation. Activated by ATP. ATP binding leads to a conformational change that promotes FAD cofactor binding and enzyme activity. ATP binding likely occurs during acox-1.4 folding and/or dimer formation. In terms of biological role, involved in the first step of peroxisomal beta-oxidation by catalyzing the desaturation of fatty acid-derived side chains of ascaroside pheromones, which regulates development and behavior. Specifically, shortens ascarosides with a 9-carbon side chain (asc-C9) and, in association with acox-1.1, may contribute to the shortening of ascarosides with a 11-carbon side chain (asc-C11). May contribute to the production of indol-3-carbonyl(IC)-ascarosides in association with acox-1.1 and acox-3. In Caenorhabditis elegans, this protein is Acyl-coenzyme A oxidase acox-1.4.